The primary structure comprises 99 residues: NADH-quinone oxidoreductase subunit K (99 aa).

A run of 3 helical transmembrane segments spans residues 2-22 (PVEY…LGVL), 28-48 (LILM…FLAF), and 60-80 (IAFF…AVVI).

The protein belongs to the complex I subunit 4L family. As to quaternary structure, NDH-1 is composed of 14 different subunits. Subunits NuoA, H, J, K, L, M, N constitute the membrane sector of the complex.

Its subcellular location is the cell inner membrane. It carries out the reaction a quinone + NADH + 5 H(+)(in) = a quinol + NAD(+) + 4 H(+)(out). Functionally, NDH-1 shuttles electrons from NADH, via FMN and iron-sulfur (Fe-S) centers, to quinones in the respiratory chain. The immediate electron acceptor for the enzyme in this species is believed to be ubiquinone. Couples the redox reaction to proton translocation (for every two electrons transferred, four hydrogen ions are translocated across the cytoplasmic membrane), and thus conserves the redox energy in a proton gradient. The chain is NADH-quinone oxidoreductase subunit K from Anaeromyxobacter dehalogenans (strain 2CP-1 / ATCC BAA-258).